A 185-amino-acid polypeptide reads, in one-letter code: Pycsar effector protein EcPycTM (185 aa).

Helical transmembrane passes span 32 to 52, 63 to 83, and 141 to 161; these read ALLL…VGYF, MVIF…SVLL, and FILS…VSWI.

It localises to the cell inner membrane. Functionally, pycsar (pyrimidine cyclase system for antiphage resistance) provides immunity against bacteriophage. The pyrimidine cyclase (PycC) synthesizes cyclic nucleotides in response to infection; these serve as specific second messenger signals. The signals activate the adjacent effector, leading to bacterial cell death and abortive phage infection. A clade E Pycsar system. In terms of biological role, the effector component of a two-gene Pycsar system. Expression of this and adjacent cytidylate cyclase EcPycC (AC P0DV24) confers resistance to bacteriophage P1 and T5; this protein is required for resistance. When cells expressing the Pycsar system are infected by phage T5 at low multiplicity of infection (0.2 MOI) the culture survives, at 2.0 MOI bacteria enter growth arrest. The same cells enter growth arrest after exposure to 250 uM cCMP but not cUMP; this effector protein responds only to cCMP, usually produced by its cognate NTP cyclase. Some of the cells treated with cCMP have abnormal membrane protrusions, probably due to effects on membrane integrity. The sequence is that of Pycsar effector protein EcPycTM from Escherichia coli.